The primary structure comprises 481 residues: UDP-glucose 6-dehydrogenase 1 (481 aa).

NAD(+) contacts are provided by residues 8–13 (GAGYVG), D33, R38, 86–90 (VNTPT), 127–128 (ST), and E162. Substrate contacts are provided by residues 158 to 162 (EFLAE), 217 to 224 (KLAANAFL), and 257 to 270 (RIGA…VGFG). Residue C273 is the Nucleophile of the active site. 273-276 (CFQK) contributes to the NAD(+) binding site. 335 to 336 (FK) is a binding site for substrate. R343 is an NAD(+) binding site. Phosphoserine is present on S394. Position 448 (R448) interacts with substrate.

This sequence belongs to the UDP-glucose/GDP-mannose dehydrogenase family.

The enzyme catalyses UDP-alpha-D-glucose + 2 NAD(+) + H2O = UDP-alpha-D-glucuronate + 2 NADH + 3 H(+). It participates in nucleotide-sugar biosynthesis; UDP-alpha-D-glucuronate biosynthesis; UDP-alpha-D-glucuronate from UDP-alpha-D-glucose: step 1/1. Functionally, involved in the biosynthesis of UDP-glucuronic acid (UDP-GlcA), providing nucleotide sugars for cell-wall polymers. The chain is UDP-glucose 6-dehydrogenase 1 (UGD1) from Oryza sativa subsp. japonica (Rice).